Here is a 302-residue protein sequence, read N- to C-terminus: MLVSRVLSRVSRSAGLRSSFSSVVTPKRNQIPIVASRFHSLVHGTPNKLVAVPVSLRNHGTLDLNVLQRFGFFSSSSAEPKGNESNTEVPKTGETSENVEVGKATDAEIDFDDLSRDDLVKLVSEKEDLLKVQQKDIMEMKDKFLRTYAEQQNLMDRTNRNAESAKKFAVQNFATSLLDVADNLERASSVVKESFSKIDTSKDLAGATPLLKNLLEGVEMTEKQLAEVFRKAGLVKEDPLNEPFNPNRHNAVFQVPDASKPKGTIAHVLKSGYSLYDRVIRPAEVGVTCAVENQEGGKESAA.

The N-terminal 39 residues, 1-39 (MLVSRVLSRVSRSAGLRSSFSSVVTPKRNQIPIVASRFH), are a transit peptide targeting the mitochondrion. The tract at residues 77 to 97 (SAEPKGNESNTEVPKTGETSE) is disordered.

Belongs to the GrpE family. Probable component of the PAM complex, at least composed of SSC1 (mtHsp70), MGE1, TIM44, PAM16/TIM16, PAM17 and PAM18/TIM14. Interacts with SSQ1.

It localises to the mitochondrion matrix. Functionally, essential component of the PAM complex, a complex required for the translocation of transit peptide-containing proteins from the inner membrane into the mitochondrial matrix in an ATP-dependent manner. Seems to control the nucleotide-dependent binding of mitochondrial HSP70 to substrate proteins. Binds ATP. Interacts with copper ions Cu(2+). This is GrpE protein homolog 1, mitochondrial from Arabidopsis thaliana (Mouse-ear cress).